A 671-amino-acid polypeptide reads, in one-letter code: tRNA(Met) cytidine acetyltransferase TmcA (671 aa).

ATP-binding positions include glutamine 180, 202–211 (GRGKSALAGQ), and arginine 319. An N-acetyltransferase domain is found at 356 to 531 (QTLWQSDPET…SGCYTAMALL (176 aa)). Acetyl-CoA contacts are provided by residues 461 to 463 (IAV), 468 to 474 (QREGTGR), glutamate 499, and arginine 506.

This sequence belongs to the RNA cytidine acetyltransferase family. TmcA subfamily.

It localises to the cytoplasm. It catalyses the reaction cytidine(34) in elongator tRNA(Met) + acetyl-CoA + ATP + H2O = N(4)-acetylcytidine(34) in elongator tRNA(Met) + ADP + phosphate + CoA + H(+). The catalysed reaction is 2-hydroxyisobutanoyl-CoA + L-lysyl-[protein] = N(6)-(2-hydroxyisobutanoyl)-L-lysyl-[protein] + CoA + H(+). ATP/GTP hydrolysis is stimulated by the addition of acetyl-CoA and tRNA(Met). Binding of acetyl-CoA to TmcA activates both ATPase and tRNA-binding activities. ATP promotes the 2-hydroxyisobutyryltransferase activity. In terms of biological role, catalyzes the formation of N(4)-acetylcytidine (ac(4)C) at the wobble position of tRNA(Met), by using acetyl-CoA as an acetyl donor and ATP (or GTP). It recognizes the wobble base of tRNA(Met), thus distinguishing between tRNA(Met) and the structurally similar tRNA(Ile2). Could use an RNA helicase motor driven by ATP hydrolysis to deliver the wobble base of tRNA(Met) to the acetyltransferase domain of TmcA. Functionally, also functions as a lysine 2-hydroxyisobutyryltransferase to regulate transcription. Can specifically catalyze the 2-hydroxyisobutyrylation (Khib) of the DNA-binding protein H-NS. Hydroxyisobutyrylation of H-NS decreases its DNA-binding activity, promotes the expression of acid-resistance genes and enhances bacterial survival under extreme acid stress. In Escherichia coli (strain K12), this protein is tRNA(Met) cytidine acetyltransferase TmcA.